The chain runs to 149 residues: Urease accessory protein UreE (149 aa).

This sequence belongs to the UreE family.

The protein resides in the cytoplasm. Its function is as follows. Involved in urease metallocenter assembly. Binds nickel. Probably functions as a nickel donor during metallocenter assembly. The protein is Urease accessory protein UreE of Ureaplasma parvum serovar 3 (strain ATCC 700970).